The primary structure comprises 547 residues: Threonine synthase (547 aa).

Residue Lys117 is modified to N6-(pyridoxal phosphate)lysine. Gly272, Asn273, Phe274, Asp276, and Thr471 together coordinate pyridoxal 5'-phosphate.

Belongs to the threonine synthase family. Pyridoxal 5'-phosphate serves as cofactor.

It catalyses the reaction O-phospho-L-homoserine + H2O = L-threonine + phosphate. It participates in amino-acid biosynthesis; L-threonine biosynthesis; L-threonine from L-aspartate: step 5/5. Functionally, catalyzes the gamma-elimination of phosphate from L-phosphohomoserine and the beta-addition of water to produce L-threonine. The polypeptide is Threonine synthase (Cryptococcus neoformans var. grubii serotype A (strain H99 / ATCC 208821 / CBS 10515 / FGSC 9487) (Filobasidiella neoformans var. grubii)).